The sequence spans 519 residues: Ribonuclease Y (519 aa).

A helical membrane pass occupies residues 3–23; the sequence is PLAILISILLSLFCLVVGYYV. One can recognise a KH domain in the interval 209 to 272; it reads TVSVVNLPND…ETARIALDKL (64 aa). The region spanning 335 to 428 is the HD domain; the sequence is VLKHSMEVAF…VAAADALSAA (94 aa).

This sequence belongs to the RNase Y family.

Its subcellular location is the cell membrane. In terms of biological role, endoribonuclease that initiates mRNA decay. This is Ribonuclease Y from Bacillus licheniformis (strain ATCC 14580 / DSM 13 / JCM 2505 / CCUG 7422 / NBRC 12200 / NCIMB 9375 / NCTC 10341 / NRRL NRS-1264 / Gibson 46).